We begin with the raw amino-acid sequence, 101 residues long: Small ribosomal subunit protein uS14A (101 aa).

The tract at residues 31 to 59 (IRSPASSPEQRVAAQSELNRQPRDASAVR) is disordered.

It belongs to the universal ribosomal protein uS14 family. In terms of assembly, part of the 30S ribosomal subunit. Contacts proteins S3 and S10.

Functionally, binds 16S rRNA, required for the assembly of 30S particles and may also be responsible for determining the conformation of the 16S rRNA at the A site. This is Small ribosomal subunit protein uS14A from Mycobacteroides abscessus (strain ATCC 19977 / DSM 44196 / CCUG 20993 / CIP 104536 / JCM 13569 / NCTC 13031 / TMC 1543 / L948) (Mycobacterium abscessus).